Consider the following 421-residue polypeptide: Enolase (421 aa).

(2R)-2-phosphoglycerate is bound at residue Q162. The active-site Proton donor is the E204. 3 residues coordinate Mg(2+): D241, E284, and D311. 4 residues coordinate (2R)-2-phosphoglycerate: K336, R365, S366, and K387. K336 (proton acceptor) is an active-site residue.

This sequence belongs to the enolase family. Mg(2+) serves as cofactor.

The protein localises to the cytoplasm. Its subcellular location is the secreted. It is found in the cell surface. It carries out the reaction (2R)-2-phosphoglycerate = phosphoenolpyruvate + H2O. It functions in the pathway carbohydrate degradation; glycolysis; pyruvate from D-glyceraldehyde 3-phosphate: step 4/5. Functionally, catalyzes the reversible conversion of 2-phosphoglycerate (2-PG) into phosphoenolpyruvate (PEP). It is essential for the degradation of carbohydrates via glycolysis. The chain is Enolase from Nitratiruptor sp. (strain SB155-2).